The following is a 220-amino-acid chain: U1 small nuclear ribonucleoprotein C (220 aa).

Residues 4 to 36 (YYCDYCDIYLTHDSMNARKAHNSGRNHVANVRD) form a Matrin-type zinc finger. Pro residues-rich tracts occupy residues 88-130 (PGPP…PFLP) and 147-165 (PPFP…PFRP). The segment at 88–220 (PGPPPPGAFP…HPDRLRMLGQ (133 aa)) is disordered. A compositionally biased stretch (low complexity) spans 166 to 200 (PMGMGMPPAPAQAQAQGSPMGMPQQGQQGTFTPTQ). A compositionally biased stretch (basic and acidic residues) spans 211–220 (HPDRLRMLGQ).

Belongs to the U1 small nuclear ribonucleoprotein C family. In terms of assembly, U1 snRNP is composed of the 7 core Sm proteins B/B', D1, D2, D3, E, F and G that assemble in a heptameric protein ring on the Sm site of the small nuclear RNA to form the core snRNP, and at least 3 U1 snRNP-specific proteins U1-70K, U1-A and U1-C. U1-C interacts with U1 snRNA and the 5' splice-site region of the pre-mRNA.

The protein resides in the nucleus. Component of the spliceosomal U1 snRNP, which is essential for recognition of the pre-mRNA 5' splice-site and the subsequent assembly of the spliceosome. U1-C is directly involved in initial 5' splice-site recognition for both constitutive and regulated alternative splicing. The interaction with the 5' splice-site seems to precede base-pairing between the pre-mRNA and the U1 snRNA. Stimulates commitment or early (E) complex formation by stabilizing the base pairing of the 5' end of the U1 snRNA and the 5' splice-site region. This chain is U1 small nuclear ribonucleoprotein C, found in Cryptococcus neoformans var. neoformans serotype D (strain JEC21 / ATCC MYA-565) (Filobasidiella neoformans).